The primary structure comprises 375 residues: Squamosa promoter-binding-like protein 9 (375 aa).

Disordered regions lie at residues 1–30 and 43–73; these read MEMG…SFSG and GGGG…QIPR. Low complexity predominate over residues 18-30; it reads SGGSSTESSSFSG. An SBP-type zinc finger spans residues 71–148; it reads IPRCQVEGCG…AGHNERRRKP (78 aa). Zn(2+)-binding residues include cysteine 74, cysteine 79, cysteine 96, histidine 99, cysteine 115, cysteine 118, histidine 122, and cysteine 134. The Bipartite nuclear localization signal motif lies at 131–147; sequence KRSCRRRLAGHNERRRK. 2 disordered regions span residues 252–278 and 345–375; these read LLSN…NTWR and SDHH…NWSL. Residues 262–275 show a composition bias toward low complexity; that stretch reads NNNNNNNNNNNNNN. Positions 345–362 are enriched in basic and acidic residues; that stretch reads SDHHHQSRRQYMEDENTR. Polar residues predominate over residues 363–375; that stretch reads AYDSSSHHTNWSL.

Zn(2+) serves as cofactor.

Its subcellular location is the nucleus. It is found in the cytoplasm. Its function is as follows. Trans-acting factor that binds specifically to the consensus nucleotide sequence 5'-TNCGTACAA-3'. In Arabidopsis thaliana (Mouse-ear cress), this protein is Squamosa promoter-binding-like protein 9 (SPL9).